Here is a 508-residue protein sequence, read N- to C-terminus: Ribonuclease Y (508 aa).

Residues 198–264 (TVSVINLPND…RLTIEKLITD (67 aa)) enclose the KH domain. The region spanning 324-417 (VLTHSIEVAK…VQAADAVSAS (94 aa)) is the HD domain.

This sequence belongs to the RNase Y family.

Endoribonuclease that initiates mRNA decay. The chain is Ribonuclease Y from Fusobacterium nucleatum subsp. nucleatum (strain ATCC 25586 / DSM 15643 / BCRC 10681 / CIP 101130 / JCM 8532 / KCTC 2640 / LMG 13131 / VPI 4355).